The following is a 28-amino-acid chain: Ranatuerin-2AVa (28 aa).

A disulfide bridge connects residues Cys-23 and Cys-28.

In terms of tissue distribution, expressed by the skin glands.

The protein localises to the secreted. In terms of biological role, has antibacterial activity against the Gram positive bacterium L.lactis. This Rana arvalis (Moor frog) protein is Ranatuerin-2AVa.